A 288-amino-acid polypeptide reads, in one-letter code: Thymidylate synthase (288 aa).

Residues arginine 21 and 150–151 contribute to the dUMP site; that span reads RR. The active-site Nucleophile is cysteine 170. DUMP is bound by residues 190–193, asparagine 201, and 231–233; these read RSGD and HIY. (6R)-5,10-methylene-5,6,7,8-tetrahydrofolate is bound at residue aspartate 193. A (6R)-5,10-methylene-5,6,7,8-tetrahydrofolate-binding site is contributed by alanine 287.

It belongs to the thymidylate synthase family. Bacterial-type ThyA subfamily. In terms of assembly, homodimer.

It is found in the cytoplasm. The catalysed reaction is dUMP + (6R)-5,10-methylene-5,6,7,8-tetrahydrofolate = 7,8-dihydrofolate + dTMP. Its pathway is pyrimidine metabolism; dTTP biosynthesis. Functionally, catalyzes the reductive methylation of 2'-deoxyuridine-5'-monophosphate (dUMP) to 2'-deoxythymidine-5'-monophosphate (dTMP) while utilizing 5,10-methylenetetrahydrofolate (mTHF) as the methyl donor and reductant in the reaction, yielding dihydrofolate (DHF) as a by-product. This enzymatic reaction provides an intracellular de novo source of dTMP, an essential precursor for DNA biosynthesis. The protein is Thymidylate synthase of Acholeplasma laidlawii (strain PG-8A).